A 587-amino-acid polypeptide reads, in one-letter code: Chaperonin GroEL 1 (587 aa).

Residues 29-32 (TIGP), 86-90 (DGTTT), Gly413, and Asp492 each bind ATP.

It belongs to the chaperonin (HSP60) family. In terms of assembly, forms a cylinder of 14 subunits composed of two heptameric rings stacked back-to-back. Interacts with the co-chaperonin GroES.

Its subcellular location is the cytoplasm. It carries out the reaction ATP + H2O + a folded polypeptide = ADP + phosphate + an unfolded polypeptide.. Functionally, together with its co-chaperonin GroES, plays an essential role in assisting protein folding. The GroEL-GroES system forms a nano-cage that allows encapsulation of the non-native substrate proteins and provides a physical environment optimized to promote and accelerate protein folding. The chain is Chaperonin GroEL 1 from Prochlorococcus marinus (strain MIT 9515).